We begin with the raw amino-acid sequence, 513 residues long: ATP synthase subunit alpha (513 aa).

Position 169–176 (169–176) interacts with ATP; the sequence is GDRQTGKT.

This sequence belongs to the ATPase alpha/beta chains family. As to quaternary structure, F-type ATPases have 2 components, CF(1) - the catalytic core - and CF(0) - the membrane proton channel. CF(1) has five subunits: alpha(3), beta(3), gamma(1), delta(1), epsilon(1). CF(0) has three main subunits: a(1), b(2) and c(9-12). The alpha and beta chains form an alternating ring which encloses part of the gamma chain. CF(1) is attached to CF(0) by a central stalk formed by the gamma and epsilon chains, while a peripheral stalk is formed by the delta and b chains.

Its subcellular location is the cell inner membrane. The catalysed reaction is ATP + H2O + 4 H(+)(in) = ADP + phosphate + 5 H(+)(out). Produces ATP from ADP in the presence of a proton gradient across the membrane. The alpha chain is a regulatory subunit. This is ATP synthase subunit alpha from Haemophilus influenzae (strain PittEE).